Here is a 171-residue protein sequence, read N- to C-terminus: Adenine phosphoribosyltransferase (171 aa).

This sequence belongs to the purine/pyrimidine phosphoribosyltransferase family. As to quaternary structure, homodimer.

Its subcellular location is the cytoplasm. The enzyme catalyses AMP + diphosphate = 5-phospho-alpha-D-ribose 1-diphosphate + adenine. Its pathway is purine metabolism; AMP biosynthesis via salvage pathway; AMP from adenine: step 1/1. Catalyzes a salvage reaction resulting in the formation of AMP, that is energically less costly than de novo synthesis. This Rhodospirillum centenum (strain ATCC 51521 / SW) protein is Adenine phosphoribosyltransferase.